The sequence spans 392 residues: Putative nicotinate phosphoribosyltransferase (392 aa).

The nicotinate site is built by Tyr21, Phe138, and Thr179. His182 bears the Phosphohistidine mark. Arg235 contributes to the nicotinate binding site. 3 residues coordinate 5-phospho-alpha-D-ribose 1-diphosphate: Ser240, Gly272, and Thr293. 4 residues coordinate Zn(2+): Cys330, Cys333, Cys348, and Cys350.

The protein belongs to the NAPRTase family. Highly divergent. In terms of assembly, homodimer. Forms a trimer of dimers in the crystal. Post-translationally, transiently phosphorylated on a His residue during the reaction cycle. Phosphorylation strongly increases the affinity for substrates and increases the rate of nicotinate D-ribonucleotide production. Dephosphorylation regenerates the low-affinity form of the enzyme, leading to product release.

It carries out the reaction nicotinate + 5-phospho-alpha-D-ribose 1-diphosphate + ATP + H2O = nicotinate beta-D-ribonucleotide + ADP + phosphate + diphosphate. It participates in cofactor biosynthesis; NAD(+) biosynthesis; nicotinate D-ribonucleotide from nicotinate: step 1/1. Catalyzes the synthesis of beta-nicotinate D-ribonucleotide from nicotinate and 5-phospho-D-ribose 1-phosphate at the expense of ATP. This Thermoplasma acidophilum (strain ATCC 25905 / DSM 1728 / JCM 9062 / NBRC 15155 / AMRC-C165) protein is Putative nicotinate phosphoribosyltransferase.